The primary structure comprises 174 residues: Disulfide bond formation protein B (174 aa).

The Cytoplasmic segment spans residues 1 to 14 (MLHIFYIYSKSRKF). The chain crosses the membrane as a helical span at residues 15 to 31 (WAILICSSISLISIALL). The Periplasmic portion of the chain corresponds to 32–49 (NQFFFLLKPCILCIYQRC). A disulfide bridge links Cys41 with Cys44. A helical transmembrane segment spans residues 50-65 (SLFGITIAGLIALISP). At 66 to 72 (KTTLLRL) the chain is on the cytoplasmic side. A helical transmembrane segment spans residues 73-90 (FSIFIWLYSAIKGLYFSN). At 91–146 (IHMQTTLHPSSSLTCDLFVSFPNWLPLNKWYPIIFDSKISNCYSYPQYLLYLEISQ) the chain is on the periplasmic side. Cys105 and Cys132 are oxidised to a cystine. The helical transmembrane segment at 147–165 (WMLLFFLIYLIIAIFTIIS) threads the bilayer. The Cytoplasmic portion of the chain corresponds to 166 to 174 (QCHNLFQKK).

It belongs to the DsbB family.

Its subcellular location is the cell inner membrane. Functionally, required for disulfide bond formation in some periplasmic proteins. Acts by oxidizing the DsbA protein. This is Disulfide bond formation protein B from Blochmanniella floridana.